We begin with the raw amino-acid sequence, 186 residues long: Tumor necrosis factor alpha-induced protein 8-like protein 1 (186 aa).

This sequence belongs to the TNFAIP8 family. Interacts with FBXW5; TNFAIP8L1 competes with TSC2 to bind FBXW5 increasing TSC2 stability by preventing its ubiquitination.

It localises to the cytoplasm. Its function is as follows. Acts as a negative regulator of mTOR activity. The polypeptide is Tumor necrosis factor alpha-induced protein 8-like protein 1 (TNFAIP8L1) (Bos taurus (Bovine)).